We begin with the raw amino-acid sequence, 342 residues long: Nuclear hormone receptor family member nhr-150 (342 aa).

Positions 1 to 71 (MCQVCGAAEA…AGMTSKKIQS (71 aa)) form a DNA-binding region, nuclear receptor. An NR C4-type zinc finger spans residues 2–22 (CQVCGAAEADLHFGGISCRAC). The NR C4-type; degenerate zinc finger occupies 39–54 (CTCKTRILDSHPCRSC). In terms of domain architecture, NR LBD spans 94–341 (SARIIPRSSL…GFMEIIRESK (248 aa)).

Belongs to the nuclear hormone receptor family.

It localises to the nucleus. Functionally, orphan nuclear receptor. The protein is Nuclear hormone receptor family member nhr-150 (nhr-150) of Caenorhabditis elegans.